The sequence spans 3083 residues: Laminin subunit alpha-1 (3083 aa).

The signal sequence occupies residues 1–24 (MRGSGTGAALLVLLASVLWVTVRS). At Gln25 the chain carries Pyrrolidone carboxylic acid. Positions 25 to 276 (QQRGLFPAIL…SIKDISVGGM (252 aa)) constitute a Laminin N-terminal domain. 6 disulfide bridges follow: Cys277–Cys286, Cys279–Cys297, Cys299–Cys308, Cys311–Cys331, Cys334–Cys343, and Cys336–Cys368. Laminin EGF-like domains are found at residues 277–333 (CICY…ECEE), 334–403 (CNCH…PCRP), 404–460 (CNCD…NCIP), and 461–509 (CDCR…GCSE). Asn370 carries N-linked (GlcNAc...) asparagine glycosylation. Disulfide bonds link Cys371–Cys380, Cys383–Cys401, Cys404–Cys416, Cys406–Cys434, Cys436–Cys445, Cys448–Cys458, Cys461–Cys474, Cys463–Cys478, Cys480–Cys489, and Cys492–Cys507. The 10-residue stretch at 510 to 519 (CFCFGVSGVC) folds into the Laminin EGF-like 5; first part domain. One can recognise a Laminin IV type A 1 domain in the interval 523 to 715 (TWSISQVTNM…DLAVAADVEH (193 aa)). A glycan (N-linked (GlcNAc...) asparagine) is linked at Asn672. Residues 716–748 (CECPQGYTGTSCEACLPGYYRVDGILFGGICQP) form the Laminin EGF-like 5; second part domain. Disulfide bonds link Cys749–Cys758, Cys751–Cys764, Cys767–Cys776, Cys779–Cys795, Cys798–Cys813, Cys800–Cys823, Cys826–Cys835, Cys838–Cys853, Cys856–Cys870, Cys858–Cys877, Cys880–Cys889, Cys892–Cys906, Cys909–Cys921, Cys911–Cys928, Cys930–Cys939, Cys942–Cys955, Cys958–Cys970, Cys960–Cys976, Cys978–Cys987, Cys990–Cys1002, Cys1005–Cys1014, Cys1007–Cys1021, Cys1023–Cys1032, Cys1035–Cys1048, Cys1051–Cys1063, Cys1053–Cys1070, Cys1072–Cys1081, Cys1084–Cys1094, Cys1097–Cys1109, Cys1099–Cys1125, Cys1127–Cys1136, and Cys1139–Cys1154. Laminin EGF-like domains are found at residues 749 to 797 (CECH…DCQP), 798 to 855 (CACP…TCVP), 856 to 908 (CNCS…NCRA), 909 to 957 (CDCH…GCVP), 958 to 1004 (CNCS…GCTP), 1005 to 1050 (CDCA…GCQA), 1051 to 1096 (CNCS…DCVP), and 1097 to 1156 (CGCD…GCSP). The Cell attachment site signature appears at 1147 to 1149 (RGD). The 10-residue stretch at 1157 to 1166 (CFCFGLSQLC) folds into the Laminin EGF-like 14; first part domain. The Laminin IV type A 2 domain occupies 1177 to 1368 (ITLASDQPLL…EGEAALLLEL (192 aa)). The N-linked (GlcNAc...) asparagine glycan is linked to Asn1344. The 41-residue stretch at 1369 to 1409 (CVCPPGTAGHSCQDCAPGYYREKLPESGGRGPRPLLAPCVP) folds into the Laminin EGF-like 14; second part domain. 12 cysteine pairs are disulfide-bonded: Cys1410–Cys1419, Cys1412–Cys1426, Cys1429–Cys1438, Cys1441–Cys1456, Cys1459–Cys1473, Cys1461–Cys1483, Cys1486–Cys1495, Cys1498–Cys1513, Cys1516–Cys1528, Cys1518–Cys1535, Cys1537–Cys1546, and Cys1549–Cys1560. 3 consecutive Laminin EGF-like domains span residues 1410–1458 (CNCN…DCTP), 1459–1515 (CTCP…SCQT), and 1516–1562 (CDCN…DCVS). The interval 1564-2123 (DDDCVGPLLN…SRARKQVASI (560 aa)) is domain II and I. A coiled-coil region spans residues 1617–1691 (AKKIRAEIQL…VATLNQTARK (75 aa)). N-linked (GlcNAc...) asparagine glycosylation is found at Asn1659, Asn1686, Asn1718, Asn1725, Asn1763, and Asn1811. Residues 1723 to 1809 (QQNATLELKA…QEKKLRVQEE (87 aa)) adopt a coiled-coil conformation. Positions 1868–1901 (KRRARDLVHRAEQHASELQSRAGALDRDLENVRN) form a coiled coil. Residues Asn1935, Asn2026, Asn2045, and Asn2066 are each glycosylated (N-linked (GlcNAc...) asparagine). 5 consecutive Laminin G-like domains span residues 2124-2304 (KVAV…CNGC), 2312-2488 (DSSF…RKGC), 2493-2679 (IQSV…LDTC), 2721-2893 (AHQF…VDRC), and 2898-3078 (QEGT…PHSC). Cys2278 and Cys2304 are disulfide-bonded. Asn2355 carries N-linked (GlcNAc...) asparagine glycosylation. 2 cysteine pairs are disulfide-bonded: Cys2464/Cys2488 and Cys2652/Cys2679. An N-linked (GlcNAc...) asparagine glycan is attached at Asn2834. A disulfide bridge links Cys2868 with Cys2893. An N-linked (GlcNAc...) asparagine glycan is attached at Asn2923. A disulfide bridge connects residues Cys3047 and Cys3078.

Laminin is a complex glycoprotein, consisting of three different polypeptide chains (alpha, beta, gamma), which are bound to each other by disulfide bonds into a cross-shaped molecule comprising one long and three short arms with globules at each end. Alpha-1 is a subunit of laminin-1 (laminin-111 or EHS laminin) and laminin-3 (laminin-121 or S-laminin). Post-translationally, tyrosine phosphorylated by PKDCC/VLK.

The protein resides in the secreted. It is found in the extracellular space. Its subcellular location is the extracellular matrix. The protein localises to the basement membrane. Binding to cells via a high affinity receptor, laminin is thought to mediate the attachment, migration and organization of cells into tissues during embryonic development by interacting with other extracellular matrix components. This is Laminin subunit alpha-1 (Lama1) from Mus musculus (Mouse).